A 344-amino-acid chain; its full sequence is Dihydroorotase (344 aa).

Positions 14 and 16 each coordinate Zn(2+). Substrate is bound by residues 16–18 and asparagine 42; that span reads HLR. 3 residues coordinate Zn(2+): lysine 100, histidine 137, and histidine 175. Lysine 100 carries the post-translational modification N6-carboxylysine. Residue histidine 137 participates in substrate binding. Leucine 220 contacts substrate. Aspartate 248 is a binding site for Zn(2+). Residue aspartate 248 is part of the active site. Substrate contacts are provided by histidine 252 and alanine 264.

It belongs to the metallo-dependent hydrolases superfamily. DHOase family. Class II DHOase subfamily. Homodimer. Zn(2+) is required as a cofactor.

It catalyses the reaction (S)-dihydroorotate + H2O = N-carbamoyl-L-aspartate + H(+). It participates in pyrimidine metabolism; UMP biosynthesis via de novo pathway; (S)-dihydroorotate from bicarbonate: step 3/3. In terms of biological role, catalyzes the reversible cyclization of carbamoyl aspartate to dihydroorotate. This Ralstonia nicotianae (strain ATCC BAA-1114 / GMI1000) (Ralstonia solanacearum) protein is Dihydroorotase.